A 375-amino-acid polypeptide reads, in one-letter code: Growth/differentiation factor 8 (375 aa).

Residues 1 to 18 (MQKLQISVYIYLFMLIVA) form the signal peptide. Positions 19-266 (GPVDLNENSE…VTDTPKRSRR (248 aa)) are excised as a propeptide. An N-linked (GlcNAc...) asparagine glycan is attached at Asn-71. 4 disulfide bridges follow: Cys-272–Cys-282, Cys-281–Cys-340, Cys-309–Cys-372, and Cys-313–Cys-374.

It belongs to the TGF-beta family. In terms of assembly, homodimer; disulfide-linked. Interacts with WFIKKN2, leading to inhibit its activity. Interacts with FSTL3. In terms of processing, synthesized as large precursor molecule that undergoes proteolytic cleavage to generate an N-terminal propeptide and a disulfide linked C-terminal dimer, which is the biologically active molecule. The circulating form consists of a latent complex of the C-terminal dimer and other proteins, including its propeptide, which maintain the C-terminal dimer in a latent, inactive state. Ligand activation requires additional cleavage of the prodomain by a tolloid-like metalloproteinase.

Its subcellular location is the secreted. Its function is as follows. Acts specifically as a negative regulator of skeletal muscle growth. The protein is Growth/differentiation factor 8 (MSTN) of Lepus capensis (Brown hare).